We begin with the raw amino-acid sequence, 215 residues long: Negative modulator of initiation of replication (215 aa).

Residues 71–93 are disordered; the sequence is AETPKPSSEQEIRTPARKQSTQS. The tract at residues 181-187 is interaction with DNA; that stretch reads NTNSGRK.

It belongs to the SeqA family. In terms of assembly, homodimer. Polymerizes to form helical filaments.

The protein localises to the cytoplasm. Functionally, negative regulator of replication initiation, which contributes to regulation of DNA replication and ensures that replication initiation occurs exactly once per chromosome per cell cycle. Binds to pairs of hemimethylated GATC sequences in the oriC region, thus preventing assembly of replication proteins and re-initiation at newly replicated origins. Repression is relieved when the region becomes fully methylated. The chain is Negative modulator of initiation of replication from Mannheimia succiniciproducens (strain KCTC 0769BP / MBEL55E).